Reading from the N-terminus, the 94-residue chain is Co-chaperonin GroES (94 aa).

This sequence belongs to the GroES chaperonin family. Heptamer of 7 subunits arranged in a ring. Interacts with the chaperonin GroEL.

Its subcellular location is the cytoplasm. Together with the chaperonin GroEL, plays an essential role in assisting protein folding. The GroEL-GroES system forms a nano-cage that allows encapsulation of the non-native substrate proteins and provides a physical environment optimized to promote and accelerate protein folding. GroES binds to the apical surface of the GroEL ring, thereby capping the opening of the GroEL channel. This chain is Co-chaperonin GroES, found in Brevibacillus brevis (strain 47 / JCM 6285 / NBRC 100599).